Consider the following 712-residue polypeptide: 3',5'-cyclic-AMP phosphodiesterase 4C (712 aa).

Disordered regions lie at residues Met1–His31 and Arg45–Arg64. Basic residues predominate over residues Ser17–His31. The segment covering Ser48–Arg64 has biased composition (basic and acidic residues). Phosphoserine is present on Ser73. The segment at Ala181 to Asp200 is disordered. The PDEase domain maps to Val312–Ser641. The active-site Proton donor is His388. His388 contributes to the 3',5'-cyclic AMP binding site. AMP-binding residues include His388 and His392. Positions 392, 428, 429, and 546 each coordinate Zn(2+). Residues Asp429, Asp546, Gln597, and Phe600 each coordinate AMP. Asp429 contacts Mg(2+). Asp429 contacts Mn(2+). The 3',5'-cyclic AMP site is built by Gln597 and Phe600. Disordered stretches follow at residues Ser636–Arg655 and Glu664–Thr712. Ser641 carries the phosphoserine modification. Acidic residues predominate over residues Glu664–Glu678.

This sequence belongs to the cyclic nucleotide phosphodiesterase family. PDE4 subfamily. As to quaternary structure, part of a complex containing AKAP5, ADCY5, ADCY6 and PKD2. Requires Zn(2+) as cofactor. Mg(2+) is required as a cofactor. Mn(2+) serves as cofactor. Expressed in various tissues but not in cells of the immune system.

Its subcellular location is the cell projection. It localises to the cilium. The enzyme catalyses 3',5'-cyclic AMP + H2O = AMP + H(+). Its pathway is purine metabolism; 3',5'-cyclic AMP degradation; AMP from 3',5'-cyclic AMP: step 1/1. With respect to regulation, inhibited by rolipram. Hydrolyzes the second messenger cAMP, which is a key regulator of many important physiological processes. In Homo sapiens (Human), this protein is 3',5'-cyclic-AMP phosphodiesterase 4C.